A 498-amino-acid polypeptide reads, in one-letter code: Histidine--tRNA ligase (498 aa).

The protein belongs to the class-II aminoacyl-tRNA synthetase family. As to quaternary structure, homodimer.

It is found in the cytoplasm. The catalysed reaction is tRNA(His) + L-histidine + ATP = L-histidyl-tRNA(His) + AMP + diphosphate + H(+). The sequence is that of Histidine--tRNA ligase from Bartonella quintana (strain Toulouse) (Rochalimaea quintana).